The following is a 336-amino-acid chain: Nicotinate-nucleotide--dimethylbenzimidazole phosphoribosyltransferase (336 aa).

The active-site Proton acceptor is glutamate 304.

Belongs to the CobT family.

The catalysed reaction is 5,6-dimethylbenzimidazole + nicotinate beta-D-ribonucleotide = alpha-ribazole 5'-phosphate + nicotinate + H(+). The protein operates within nucleoside biosynthesis; alpha-ribazole biosynthesis; alpha-ribazole from 5,6-dimethylbenzimidazole: step 1/2. Functionally, catalyzes the synthesis of alpha-ribazole-5'-phosphate from nicotinate mononucleotide (NAMN) and 5,6-dimethylbenzimidazole (DMB). The chain is Nicotinate-nucleotide--dimethylbenzimidazole phosphoribosyltransferase from Mesorhizobium japonicum (strain LMG 29417 / CECT 9101 / MAFF 303099) (Mesorhizobium loti (strain MAFF 303099)).